We begin with the raw amino-acid sequence, 415 residues long: Serine hydroxymethyltransferase (415 aa).

(6S)-5,6,7,8-tetrahydrofolate-binding positions include Leu-121 and 125-127; that span reads GHL. Lys-230 carries the post-translational modification N6-(pyridoxal phosphate)lysine. 355 to 357 contacts (6S)-5,6,7,8-tetrahydrofolate; the sequence is SPF.

This sequence belongs to the SHMT family. Homodimer. Requires pyridoxal 5'-phosphate as cofactor.

Its subcellular location is the cytoplasm. The enzyme catalyses (6R)-5,10-methylene-5,6,7,8-tetrahydrofolate + glycine + H2O = (6S)-5,6,7,8-tetrahydrofolate + L-serine. The protein operates within one-carbon metabolism; tetrahydrofolate interconversion. Its pathway is amino-acid biosynthesis; glycine biosynthesis; glycine from L-serine: step 1/1. Functionally, catalyzes the reversible interconversion of serine and glycine with tetrahydrofolate (THF) serving as the one-carbon carrier. This reaction serves as the major source of one-carbon groups required for the biosynthesis of purines, thymidylate, methionine, and other important biomolecules. Also exhibits THF-independent aldolase activity toward beta-hydroxyamino acids, producing glycine and aldehydes, via a retro-aldol mechanism. The sequence is that of Serine hydroxymethyltransferase from Lactococcus lactis subsp. cremoris (strain SK11).